A 433-amino-acid polypeptide reads, in one-letter code: Serine hydroxymethyltransferase (433 aa).

(6S)-5,6,7,8-tetrahydrofolate contacts are provided by residues leucine 132 and glycine 136–leucine 138. At lysine 241 the chain carries N6-(pyridoxal phosphate)lysine.

It belongs to the SHMT family. Homodimer. Pyridoxal 5'-phosphate is required as a cofactor.

The protein localises to the cytoplasm. The catalysed reaction is (6R)-5,10-methylene-5,6,7,8-tetrahydrofolate + glycine + H2O = (6S)-5,6,7,8-tetrahydrofolate + L-serine. It participates in one-carbon metabolism; tetrahydrofolate interconversion. Its pathway is amino-acid biosynthesis; glycine biosynthesis; glycine from L-serine: step 1/1. Functionally, catalyzes the reversible interconversion of serine and glycine with tetrahydrofolate (THF) serving as the one-carbon carrier. This reaction serves as the major source of one-carbon groups required for the biosynthesis of purines, thymidylate, methionine, and other important biomolecules. Also exhibits THF-independent aldolase activity toward beta-hydroxyamino acids, producing glycine and aldehydes, via a retro-aldol mechanism. This is Serine hydroxymethyltransferase from Nitrobacter winogradskyi (strain ATCC 25391 / DSM 10237 / CIP 104748 / NCIMB 11846 / Nb-255).